A 467-amino-acid polypeptide reads, in one-letter code: Cytochrome P450 76A1 (467 aa).

Cys410 is a binding site for heme.

The protein belongs to the cytochrome P450 family. Requires heme as cofactor.

The chain is Cytochrome P450 76A1 (CYP76A1) from Solanum melongena (Eggplant).